The following is a 147-amino-acid chain: Adenylylsulfatase HINT1 (147 aa).

The 111-residue stretch at 37–147 folds into the HIT domain; it reads IFDKIISKEI…GGRQMNWPPG (111 aa). A Histidine triad motif motif is present at residues 131-135; it reads HIHVH. The Tele-AMP-histidine intermediate role is filled by His-133. Residue His-135 coordinates substrate.

The protein resides in the peroxisome. The protein localises to the plastid. It localises to the chloroplast. The enzyme catalyses adenosine 5'-phosphosulfate + H2O = sulfate + AMP + 2 H(+). Functionally, possesses adenylylsulfatase activity in vitro. The sequence is that of Adenylylsulfatase HINT1 from Arabidopsis thaliana (Mouse-ear cress).